Here is a 283-residue protein sequence, read N- to C-terminus: 1-deoxypentalenic acid 11-beta-hydroxylase (283 aa).

Residue arginine 117 coordinates substrate. Fe cation-binding residues include histidine 135 and aspartate 137. Residues 135 to 137 (HQD) and tryptophan 151 contribute to the 2-oxoglutarate site. Arginine 186 contacts substrate. Residue histidine 224 participates in Fe cation binding. 2-oxoglutarate contacts are provided by serine 226 and arginine 238. A disordered region spans residues 260–283 (WPESAKDASKGILSKITGTPTTAE).

Belongs to the PhyH family. Fe cation is required as a cofactor. L-ascorbate serves as cofactor.

It catalyses the reaction 1-deoxypentalenate + 2-oxoglutarate + O2 = 1-deoxy-11beta-hydroxypentalenate + succinate + CO2. It participates in antibiotic biosynthesis; pentalenolactone biosynthesis. Functionally, catalyzes the conversion of 1-deoxypentalenic acid to 11-beta-hydroxy-1-deoxypentalenic acid in the biosynthesis of pentalenolactone antibiotic. In Streptomyces exfoliatus (Streptomyces hydrogenans), this protein is 1-deoxypentalenic acid 11-beta-hydroxylase (penH).